A 227-amino-acid polypeptide reads, in one-letter code: Protein Saci_0792 (227 aa).

An AMMECR1 domain is found at 15-209 (DIGKQLIKIA…EINKNTDEII (195 aa)).

This Sulfolobus acidocaldarius (strain ATCC 33909 / DSM 639 / JCM 8929 / NBRC 15157 / NCIMB 11770) protein is Protein Saci_0792.